Reading from the N-terminus, the 274-residue chain is Orotidine 5'-phosphate decarboxylase (274 aa).

Lys95 acts as the Proton donor in catalysis.

Belongs to the OMP decarboxylase family. Type 2 subfamily.

The catalysed reaction is orotidine 5'-phosphate + H(+) = UMP + CO2. Its pathway is pyrimidine metabolism; UMP biosynthesis via de novo pathway; UMP from orotate: step 2/2. The protein is Orotidine 5'-phosphate decarboxylase of Mycobacterium avium (strain 104).